Reading from the N-terminus, the 394-residue chain is Putative bacilysin exporter BacE (394 aa).

Transmembrane regions (helical) follow at residues 11 to 31 (LLYGQALSFMGDYCVLPALLI), 43 to 63 (SGVIVVRSIPMVFQPFLGVLV), 69 to 89 (IKIMLWTDIIRGIIFLGLTFL), 92 to 112 (GEYPLIFLALLFITYGSGVFF), 142 to 162 (IIVGAAAGGLFLLGGSVELAV), 166 to 186 (GVTYLVSAFFISRIKLQFVPI), 215 to 235 (MFTMITMALLWGVVYSYFPIV), 244 to 264 (IGNFILTFCIGFGGFIGAALV), 288 to 308 (LFLFTPIFAVSVIAAILFFIA), 332 to 352 (IFSVAEASIGLCISIGSMFIN), and 353 to 373 (ILSAPVIMGLIVVIVCGLFLH).

This sequence belongs to the major facilitator superfamily. Drug:H(+) antiporter-3 (DHA3) (TC 2.A.1.21) family.

The protein resides in the cell membrane. In terms of biological role, part of the bacilysin biosynthesis operon. May be involved in self-resistance to bacilysin by permitting efflux of this antibiotic. The polypeptide is Putative bacilysin exporter BacE (bacE) (Bacillus subtilis (strain 168)).